The primary structure comprises 785 residues: Solute carrier family 45 member 4 (785 aa).

The interval 1–43 (MKMAPQNADSESMQVQELPVPLPDPQKPRDPEAETQEETTSEG) is disordered. 6 helical membrane-spanning segments follow: residues 64–84 (EFCYAMETALVTPILLQIGLP), 87–107 (YYSLTWFLSPVLGLIFTPLIG), 124–144 (ILALCVGVLIGVALFLNGSAI), 156–176 (PIGIVLTVLGVVVLDFSADAT), 197–217 (LNIHAFSAGLGGAIGYVLGGL), and 234–254 (VLFFFAAVIFSVSVALHLFSI). 2 disordered regions span residues 259 to 309 (YSPQ…VQSE) and 401 to 430 (KVPNGRGSPPINSLSRSKVDLKPSVTSGSM). Phosphoserine is present on residues S442 and S472. Residues 478 to 505 (DLQQRQRSRHRNQSGATASSGDTESEEG) are disordered. The span at 490–499 (QSGATASSGD) shows a compositional bias: low complexity. At S502 the chain carries Phosphoserine. Transmembrane regions (helical) follow at residues 525–545 (LMWLCLCHLLTWFSVIAEAVF), 577–597 (MGCWGLVIYAATGAICSALLQ), 609–629 (IIYMLGTLGFSVGTAVMAMFP), 631–651 (VYVAMVTISTMGVVSMSISYC), 683–703 (ILSCQVYISQILVASALGGVV), and 709–729 (IVVIPIVASVGSFLGFLTATF). The interval 741 to 772 (KEEQKGLSSGPAGEGEGGAGSEKPTVLKLSRK) is disordered. S749 is subject to Phosphoserine.

It belongs to the glycoside-pentoside-hexuronide (GPH) cation symporter transporter (TC 2.A.2) family. Ubiquitously expressed.

Its subcellular location is the membrane. The enzyme catalyses sucrose(out) + H(+)(out) = sucrose(in) + H(+)(in). In terms of biological role, proton-associated sucrose transporter. May be able to transport also glucose and fructose. The protein is Solute carrier family 45 member 4 (Slc45a4) of Mus musculus (Mouse).